The following is a 111-amino-acid chain: Ig kappa chain V-III region MOPC 70 (111 aa).

Positions 1 to 23 are framework-1; the sequence is DIVLTQSPASLAVSLGQRATISC. An intrachain disulfide couples C23 to C92. Residues 24 to 38 are complementarity-determining-1; it reads RASESVDNSGISFMN. Residues 39 to 53 are framework-2; it reads WFQQKPGQPPKLLIY. Residues 54–60 form a complementarity-determining-2 region; that stretch reads AASNQGS. The interval 61-92 is framework-3; the sequence is GVPARFSGSGSGTDFSLNIHPMEEDDTAMYFC. The tract at residues 93-101 is complementarity-determining-3; that stretch reads QQSKEVPWT. Positions 102-111 are framework-4; the sequence is FGGGTKLEIK.

This Mus musculus (Mouse) protein is Ig kappa chain V-III region MOPC 70.